We begin with the raw amino-acid sequence, 511 residues long: Bifunctional purine biosynthesis protein PurH (511 aa).

The 146-residue stretch at 1-146 (MGRLALISVT…KNFAHLTVIS (146 aa)) folds into the MGS-like domain.

Belongs to the PurH family.

It carries out the reaction (6R)-10-formyltetrahydrofolate + 5-amino-1-(5-phospho-beta-D-ribosyl)imidazole-4-carboxamide = 5-formamido-1-(5-phospho-D-ribosyl)imidazole-4-carboxamide + (6S)-5,6,7,8-tetrahydrofolate. The catalysed reaction is IMP + H2O = 5-formamido-1-(5-phospho-D-ribosyl)imidazole-4-carboxamide. It participates in purine metabolism; IMP biosynthesis via de novo pathway; 5-formamido-1-(5-phospho-D-ribosyl)imidazole-4-carboxamide from 5-amino-1-(5-phospho-D-ribosyl)imidazole-4-carboxamide (10-formyl THF route): step 1/1. Its pathway is purine metabolism; IMP biosynthesis via de novo pathway; IMP from 5-formamido-1-(5-phospho-D-ribosyl)imidazole-4-carboxamide: step 1/1. The polypeptide is Bifunctional purine biosynthesis protein PurH (Microcystis aeruginosa (strain NIES-843 / IAM M-2473)).